The chain runs to 149 residues: Large ribosomal subunit protein uL15 (149 aa).

The interval G30–Q63 is disordered. A compositionally biased stretch (basic residues) spans G36–G49.

This sequence belongs to the universal ribosomal protein uL15 family. Part of the 50S ribosomal subunit.

Functionally, binds to the 23S rRNA. The chain is Large ribosomal subunit protein uL15 from Xylella fastidiosa (strain 9a5c).